The following is a 404-amino-acid chain: Riboflavin biosynthesis protein RibBA (404 aa).

Residues 1-204 (MEELKLNTIE…IRDLIAYRLK (204 aa)) form a DHBP synthase region. D-ribulose 5-phosphate is bound by residues 30-31 (RE), aspartate 35, 143-147 (RAGHT), and glutamate 167. Glutamate 31 is a binding site for Mg(2+). Histidine 146 is a Mg(2+) binding site. A GTP cyclohydrolase II region spans residues 205–404 (QESLVEKGVE…RMGHTLHFNK (200 aa)). 255–259 (RVHSS) provides a ligand contact to GTP. Zn(2+) is bound by residues cysteine 260, cysteine 271, and cysteine 273. Residues glutamine 276, 298–300 (EGR), and threonine 320 each bind GTP. Aspartate 332 functions as the Proton acceptor; for GTP cyclohydrolase activity in the catalytic mechanism. Arginine 334 serves as the catalytic Nucleophile; for GTP cyclohydrolase activity. GTP-binding residues include threonine 355 and lysine 360.

The protein in the N-terminal section; belongs to the DHBP synthase family. It in the C-terminal section; belongs to the GTP cyclohydrolase II family. Mg(2+) serves as cofactor. The cofactor is Mn(2+). It depends on Zn(2+) as a cofactor.

The catalysed reaction is D-ribulose 5-phosphate = (2S)-2-hydroxy-3-oxobutyl phosphate + formate + H(+). It catalyses the reaction GTP + 4 H2O = 2,5-diamino-6-hydroxy-4-(5-phosphoribosylamino)-pyrimidine + formate + 2 phosphate + 3 H(+). It functions in the pathway cofactor biosynthesis; riboflavin biosynthesis; 2-hydroxy-3-oxobutyl phosphate from D-ribulose 5-phosphate: step 1/1. It participates in cofactor biosynthesis; riboflavin biosynthesis; 5-amino-6-(D-ribitylamino)uracil from GTP: step 1/4. In terms of biological role, catalyzes the conversion of D-ribulose 5-phosphate to formate and 3,4-dihydroxy-2-butanone 4-phosphate. Functionally, catalyzes the conversion of GTP to 2,5-diamino-6-ribosylamino-4(3H)-pyrimidinone 5'-phosphate (DARP), formate and pyrophosphate. The protein is Riboflavin biosynthesis protein RibBA of Phocaeicola vulgatus (strain ATCC 8482 / DSM 1447 / JCM 5826 / CCUG 4940 / NBRC 14291 / NCTC 11154) (Bacteroides vulgatus).